The chain runs to 176 residues: Ribosome maturation factor RimM (176 aa).

The 75-residue stretch at 99–173 folds into the PRC barrel domain; that stretch reads KEGEFHLVDL…WLLIKPPPGL (75 aa).

Belongs to the RimM family. Binds ribosomal protein uS19.

It localises to the cytoplasm. Functionally, an accessory protein needed during the final step in the assembly of 30S ribosomal subunit, possibly for assembly of the head region. Essential for efficient processing of 16S rRNA. May be needed both before and after RbfA during the maturation of 16S rRNA. It has affinity for free ribosomal 30S subunits but not for 70S ribosomes. The protein is Ribosome maturation factor RimM of Prochlorococcus marinus (strain MIT 9211).